We begin with the raw amino-acid sequence, 1415 residues long: Bridge-like lipid transfer protein family member 3B (1415 aa).

In terms of domain architecture, Chorein N-terminal spans 3 to 94 (GLIKKQILKH…DKVIMEMSTC (92 aa)). Disordered stretches follow at residues 267 to 300 (STEQRKSMASETTQSPTPPVSSQQVKNPQTSTTP) and 882 to 904 (KSPLPCEGSPVTDHKLPSPSEGV). A compositionally biased stretch (polar residues) spans 275–300 (ASETTQSPTPPVSSQQVKNPQTSTTP). Residues 1367–1404 (KAAGISKEQLVEENECLKQELAKTKMALAESHMERDRL) adopt a coiled-coil conformation.

The protein localises to the cytoplasm. It is found in the cytosol. Its subcellular location is the early endosome. Its function is as follows. Tube-forming lipid transport protein which mediates the transfer of lipids between membranes at organelle contact sites. Required for retrograde traffic of vesicle clusters in the early endocytic pathway to the Golgi complex. The protein is Bridge-like lipid transfer protein family member 3B (bltp3b) of Xenopus laevis (African clawed frog).